An 889-amino-acid chain; its full sequence is Translation initiation factor IF-2 (889 aa).

Disordered regions lie at residues 47-85 (GHLKKQHGDESEAKPNKLTLNRKTKSTLTMGHGSKAKSV) and 206-302 (AEAA…FTKP). 3 stretches are compositionally biased toward basic and acidic residues: residues 52 to 61 (QHGDESEAKP), 214 to 241 (AAKKLAEENEGRWKEQEAERKAKEKEVV), and 252 to 263 (AEDKSDSADESG). Residues 389–558 (TRAPVVTIMG…LLQSEVLELT (170 aa)) enclose the tr-type G domain. Residues 398–405 (GHVDHGKT) form a G1 region. Residue 398 to 405 (GHVDHGKT) participates in GTP binding. Positions 423-427 (GITQH) are G2. The G3 stretch occupies residues 444–447 (DTPG). GTP contacts are provided by residues 444 to 448 (DTPGH) and 498 to 501 (NKMD). A G4 region spans residues 498 to 501 (NKMD). A G5 region spans residues 534 to 536 (SAK).

The protein belongs to the TRAFAC class translation factor GTPase superfamily. Classic translation factor GTPase family. IF-2 subfamily.

Its subcellular location is the cytoplasm. In terms of biological role, one of the essential components for the initiation of protein synthesis. Protects formylmethionyl-tRNA from spontaneous hydrolysis and promotes its binding to the 30S ribosomal subunits. Also involved in the hydrolysis of GTP during the formation of the 70S ribosomal complex. This chain is Translation initiation factor IF-2, found in Colwellia psychrerythraea (strain 34H / ATCC BAA-681) (Vibrio psychroerythus).